The following is a 69-amino-acid chain: Pleurain-A3 (69 aa).

Residues 1-22 (MFTLKKTLLLLFFLGTISISLC) form the signal peptide. A propeptide spanning residues 23-43 (KQARDADEDDGRKMTEEEVKR) is cleaved from the precursor. A disulfide bridge links Cys63 with Cys69.

This sequence belongs to the frog skin active peptide (FSAP) family. Pleurain subfamily. In terms of tissue distribution, expressed by the skin glands.

The protein localises to the secreted. Antimicrobial peptide. Has activity against Gram-positive and -negative bacteria, and fungi. Has little hemolytic activity on red blood cells. This Nidirana pleuraden (Yunnan pond frog) protein is Pleurain-A3.